We begin with the raw amino-acid sequence, 318 residues long: DNA-directed RNA polymerase subunit alpha (318 aa).

Positions 1–232 (MAHQRIVGPT…NLFSPLQNVR (232 aa)) are alpha N-terminal domain (alpha-NTD). The tract at residues 246-318 (KMTEVLVEEL…HLPKEKFTKD (73 aa)) is alpha C-terminal domain (alpha-CTD).

The protein belongs to the RNA polymerase alpha chain family. As to quaternary structure, in plastids the minimal PEP RNA polymerase catalytic core is composed of four subunits: alpha, beta, beta', and beta''. When a (nuclear-encoded) sigma factor is associated with the core the holoenzyme is formed, which can initiate transcription.

The protein resides in the plastid. It is found in the chloroplast. It catalyses the reaction RNA(n) + a ribonucleoside 5'-triphosphate = RNA(n+1) + diphosphate. Its function is as follows. DNA-dependent RNA polymerase catalyzes the transcription of DNA into RNA using the four ribonucleoside triphosphates as substrates. The chain is DNA-directed RNA polymerase subunit alpha from Chlorokybus atmophyticus (Soil alga).